A 117-amino-acid polypeptide reads, in one-letter code: Ig heavy chain V region 1-72 (117 aa).

An N-terminal signal peptide occupies residues 1–19 (MGWSCIMLFLAATATGVHS). The segment at 20 to 49 (QVQLQQPGAELVKPGASVKLSCKASGYTFT) is framework-1. C41 and C115 are disulfide-bonded. The interval 50–54 (SYWMH) is complementarity-determining-1. A framework-2 region spans residues 55–68 (WVKQRPGRGLEWIG). Residues 69 to 85 (RIDPNSGGTKYNEKFKS) are complementarity-determining-2. Residues 86 to 117 (KATLTVDKPSSTAYMQLSSLTSEDSAVYYCAR) form a framework-3 region.

The polypeptide is Ig heavy chain V region 1-72 (Mus musculus (Mouse)).